Reading from the N-terminus, the 252-residue chain is Protein Flattop homolog (252 aa).

The tract at residues Thr177–His252 is disordered. Positions Pro218 to His252 are enriched in basic and acidic residues.

It belongs to the Flattop family.

The polypeptide is Protein Flattop homolog (Drosophila melanogaster (Fruit fly)).